Here is a 360-residue protein sequence, read N- to C-terminus: Phenylalanine--tRNA ligase alpha subunit (360 aa).

A Mg(2+)-binding site is contributed by E260.

The protein belongs to the class-II aminoacyl-tRNA synthetase family. Phe-tRNA synthetase alpha subunit type 1 subfamily. In terms of assembly, tetramer of two alpha and two beta subunits. Requires Mg(2+) as cofactor.

Its subcellular location is the cytoplasm. The enzyme catalyses tRNA(Phe) + L-phenylalanine + ATP = L-phenylalanyl-tRNA(Phe) + AMP + diphosphate + H(+). The polypeptide is Phenylalanine--tRNA ligase alpha subunit (Methylobacterium sp. (strain 4-46)).